A 364-amino-acid polypeptide reads, in one-letter code: Mannose-1-phosphate guanylyltransferase catalytic subunit beta (364 aa).

Residues 2–220 form a substrate-binding domain region; the sequence is KALILVGGYG…PGFWMDVGQP (219 aa). Aspartate 109 provides a ligand contact to GDP-alpha-D-mannose. Mg(2+) is bound at residue aspartate 109. The active site involves lysine 160. Aspartate 216 is a GDP-alpha-D-mannose binding site. Aspartate 216 contributes to the Mg(2+) binding site. The hexapeptide repeat domain stretch occupies residues 243–364; it reads ATGSNIHGTA…VNVPSKDIIM (122 aa).

It belongs to the transferase hexapeptide repeat family. Component of the GMPPA-GMPPB mannose-1-phosphate guanylyltransferase complex composed of 4 GMPPA subunits and 8 tag-335/GMPPB subunits; the complex is organized into three layers, a central layer made up of 2 GMPPA dimers sandwiched between two layers each made up of 2 tag-335/GMPPB dimers. Catalytic activity of tag-335/GMPPB is reduced when part of the complex and binding of GDP-alpha-D-Mannose by GMPPA induces allosteric feedback inhibition of tag-335/GMPPB. It depends on Mg(2+) as a cofactor.

The catalysed reaction is alpha-D-mannose 1-phosphate + GTP + H(+) = GDP-alpha-D-mannose + diphosphate. The protein operates within nucleotide-sugar biosynthesis; GDP-alpha-D-mannose biosynthesis; GDP-alpha-D-mannose from alpha-D-mannose 1-phosphate (GTP route): step 1/1. Enzyme activity is reduced by incorporation into the GMPPA-GMPPB mannose-1-phosphate guanylyltransferase complex. Allosterically inhibited, when part of the GMPPA-GMPPB complex, by GDP-alpha-D-mannose binding to GMPPA. In terms of biological role, catalytic subunit of the GMPPA-GMPPB mannose-1-phosphate guanylyltransferase complex. Catalyzes the formation of GDP-mannose, an essential precursor of glycan moieties of glycoproteins and glycolipids. Can catalyze the reverse reaction in vitro. Together with GMPPA regulates GDP-alpha-D-mannose levels. This Caenorhabditis briggsae protein is Mannose-1-phosphate guanylyltransferase catalytic subunit beta.